Reading from the N-terminus, the 654-residue chain is WD repeat-containing protein 70 (654 aa).

2 disordered regions span residues 1–26 (MERSGPSEVTGSDASGPDPQLAVTMG) and 43–175 (FEQT…DSHE). The span at 45-78 (QTRRTAVERSRKTLEAREKEEEMNREKELRRQNE) shows a compositional bias: basic and acidic residues. The span at 99–111 (RDTSSSESEQSSD) shows a compositional bias: low complexity. Acidic residues predominate over residues 147–164 (NEEEEEAEEEEEEEEEEE). Basic and acidic residues predominate over residues 165-175 (NPVHKIPDSHE). WD repeat units follow at residues 180 to 219 (HGTKTVSALGLDPSGARLVTGGYDYDVKFWDFAGMDASFK), 227 to 268 (CECH…ECIK), 281 to 321 (GHTA…KQKS), 330 to 369 (GKKVIPTTCTYSRDGNLIAAACQNGSIQIWDRNLTVHPKF), 376 to 415 (DSGTDTSCVTFSYDGNVLASRGGDDSLKLWDIRQFNKPLF), 421 to 466 (PTMF…RVYE), and 469 to 508 (ITDASVVRCLWHPKLNQIMVGTGNGLAKVYYDPNKSQRGA). Lys296 is covalently cross-linked (Glycyl lysine isopeptide (Lys-Gly) (interchain with G-Cter in SUMO2)). Lys452 bears the N6-acetyllysine mark. Residues 540–565 (REPRQRSTRKQLEKDRLDPLKSHKPE) are compositionally biased toward basic and acidic residues. The tract at residues 540 to 579 (REPRQRSTRKQLEKDRLDPLKSHKPEPPVAGPGRGGRVGT) is disordered. Thr579 is subject to Phosphothreonine. Glycyl lysine isopeptide (Lys-Gly) (interchain with G-Cter in SUMO2) cross-links involve residues Lys590 and Lys596. A phosphoserine mark is found at Ser621 and Ser638. Residues 630–654 (KTMFAQVESDDEEAKNEPEWKKRKI) are disordered. The span at 644-654 (KNEPEWKKRKI) shows a compositional bias: basic and acidic residues.

It belongs to the WD repeat GAD-1 family.

In Homo sapiens (Human), this protein is WD repeat-containing protein 70 (WDR70).